The chain runs to 199 residues: uncharacterized protein (199 aa).

Residues 1 to 48 form a disordered region; sequence MSANEFYSSGQQGQYNQQNNQERTGAPNNGQYGADNGNPNGERGLFST. At S2 the chain carries N-acetylserine. The segment covering 7-21 has biased composition (low complexity); it reads YSSGQQGQYNQQNNQ. The span at 22 to 31 shows a compositional bias: polar residues; the sequence is ERTGAPNNGQ. 2 positions are modified to phosphoserine: S53 and S70. The disordered stretch occupies residues 89–199; that stretch reads RKEHKQQEQY…RQGFNGGSRW (111 aa). Gly residues-rich tracts occupy residues 124-163, 170-179, and 186-199; these read GGFG…GFGG, GGPGGQGFGG, and GGQG…GSRW.

It is found in the mitochondrion. This is an uncharacterized protein from Saccharomyces cerevisiae (strain ATCC 204508 / S288c) (Baker's yeast).